The following is a 100-amino-acid chain: uncharacterized protein (100 aa).

It localises to the mitochondrion. This is an uncharacterized protein from Arabidopsis thaliana (Mouse-ear cress).